The chain runs to 264 residues: Tryptophan synthase alpha chain (264 aa).

Active-site proton acceptor residues include glutamate 45 and aspartate 56.

It belongs to the TrpA family. Tetramer of two alpha and two beta chains.

The catalysed reaction is (1S,2R)-1-C-(indol-3-yl)glycerol 3-phosphate + L-serine = D-glyceraldehyde 3-phosphate + L-tryptophan + H2O. It participates in amino-acid biosynthesis; L-tryptophan biosynthesis; L-tryptophan from chorismate: step 5/5. Functionally, the alpha subunit is responsible for the aldol cleavage of indoleglycerol phosphate to indole and glyceraldehyde 3-phosphate. This Leptospira borgpetersenii serovar Hardjo-bovis (strain JB197) protein is Tryptophan synthase alpha chain.